We begin with the raw amino-acid sequence, 92 residues long: Acylphosphatase (92 aa).

The Acylphosphatase-like domain occupies 5-92 (ATAAYVYGVV…TDYKGFTIRY (88 aa)). Catalysis depends on residues Arg20 and Asn38.

It belongs to the acylphosphatase family.

It carries out the reaction an acyl phosphate + H2O = a carboxylate + phosphate + H(+). This chain is Acylphosphatase (acyP), found in Pectobacterium atrosepticum (strain SCRI 1043 / ATCC BAA-672) (Erwinia carotovora subsp. atroseptica).